We begin with the raw amino-acid sequence, 947 residues long: Bifunctional glutamine synthetase adenylyltransferase/adenylyl-removing enzyme (947 aa).

The tract at residues 1–440 is adenylyl removase; the sequence is MTPLSSPLSQ…VFNELIGDDE (440 aa). An adenylyl transferase region spans residues 450–947; the sequence is SEPWREVWQD…ASWRKWLVAV (498 aa).

It belongs to the GlnE family. Requires Mg(2+) as cofactor.

It carries out the reaction [glutamine synthetase]-O(4)-(5'-adenylyl)-L-tyrosine + phosphate = [glutamine synthetase]-L-tyrosine + ADP. It catalyses the reaction [glutamine synthetase]-L-tyrosine + ATP = [glutamine synthetase]-O(4)-(5'-adenylyl)-L-tyrosine + diphosphate. Functionally, involved in the regulation of glutamine synthetase GlnA, a key enzyme in the process to assimilate ammonia. When cellular nitrogen levels are high, the C-terminal adenylyl transferase (AT) inactivates GlnA by covalent transfer of an adenylyl group from ATP to specific tyrosine residue of GlnA, thus reducing its activity. Conversely, when nitrogen levels are low, the N-terminal adenylyl removase (AR) activates GlnA by removing the adenylyl group by phosphorolysis, increasing its activity. The regulatory region of GlnE binds the signal transduction protein PII (GlnB) which indicates the nitrogen status of the cell. The polypeptide is Bifunctional glutamine synthetase adenylyltransferase/adenylyl-removing enzyme (Salmonella schwarzengrund (strain CVM19633)).